We begin with the raw amino-acid sequence, 311 residues long: Pyrimidine-specific ribonucleoside hydrolase RihA (311 aa).

The active site involves histidine 240.

This sequence belongs to the IUNH family. RihA subfamily.

Its function is as follows. Hydrolyzes with equal efficiency cytidine or uridine to ribose and cytosine or uracil, respectively. This is Pyrimidine-specific ribonucleoside hydrolase RihA from Escherichia coli (strain SMS-3-5 / SECEC).